Here is a 338-residue protein sequence, read N- to C-terminus: D-erythrose-4-phosphate dehydrogenase (338 aa).

An NAD(+)-binding site is contributed by 12–13 (RI). Substrate contacts are provided by residues 154-156 (SCT), Arg-200, 213-214 (TK), and Arg-236. Residue Cys-155 is the Nucleophile of the active site. Asn-318 provides a ligand contact to NAD(+).

The protein belongs to the glyceraldehyde-3-phosphate dehydrogenase family. Epd subfamily. Homotetramer.

It localises to the cytoplasm. The catalysed reaction is D-erythrose 4-phosphate + NAD(+) + H2O = 4-phospho-D-erythronate + NADH + 2 H(+). Its pathway is cofactor biosynthesis; pyridoxine 5'-phosphate biosynthesis; pyridoxine 5'-phosphate from D-erythrose 4-phosphate: step 1/5. In terms of biological role, catalyzes the NAD-dependent conversion of D-erythrose 4-phosphate to 4-phosphoerythronate. The protein is D-erythrose-4-phosphate dehydrogenase of Yersinia enterocolitica serotype O:8 / biotype 1B (strain NCTC 13174 / 8081).